A 423-amino-acid chain; its full sequence is Immunity-related GTPase family M protein 3 (423 aa).

Residues 83–260 (YRVKIAVTGD…PELRNTLQKD (178 aa)) enclose the IRG-type G domain. Residues 92-99 (DSGNGMSS), 117-121 (TGVVR), and 200-202 (KLD) contribute to the GTP site.

Belongs to the TRAFAC class dynamin-like GTPase superfamily. IRG family.

It localises to the endoplasmic reticulum. It is found in the cytoplasmic vesicle membrane. The protein resides in the lipid droplet. The catalysed reaction is GTP + H2O = GDP + phosphate + H(+). Functionally, immunity-related GTPase that plays important roles in host resistance to acute infection by protozoan, such as Toxoplasma gondii and Leishmania major. Acts as a dynamin-like protein that binds to intracellular membranes and promotes remodeling and trafficking of those membranes. Acts predominantly to restrict acute protozoan infection: expression is required in both hematopoietic and non-hematopoietic cellular compartments and is dependent on Stat1. Only plays a partial role in the control of latent Toxoplasma infection. Involved in the clearance of acute protozoan infections by regulating autophagy, possibly by promoting the fusion of phagosomes with lysosomes for efficient degradation of vacuoles containing parasites. Probably involved in membrane disruption of parasite-containing vacuoles. In addition to its role in resistance to acute infection by protozoan, also acts as a negative regulator of the integrated stress response (ISR) following coxsackievirus B3 infection. Promotes differentiation of activated CD8(+) T-cells. The polypeptide is Immunity-related GTPase family M protein 3 (Mus musculus (Mouse)).